Reading from the N-terminus, the 438-residue chain is Adenylosuccinate synthetase (438 aa).

GTP-binding positions include 13-19 and 41-43; these read GDEGKGK and GHT. The Proton acceptor role is filled by D14. Mg(2+)-binding residues include D14 and G41. IMP is bound by residues 14–17, 39–42, T130, R144, Q225, T240, and R312; these read DEGK and NAGH. H42 acts as the Proton donor in catalysis. 308-314 contributes to the substrate binding site; sequence ATTGRQR. GTP-binding positions include R314, 340–342, and 422–424; these read KLD and STG.

This sequence belongs to the adenylosuccinate synthetase family. As to quaternary structure, homodimer. Requires Mg(2+) as cofactor.

The protein resides in the cytoplasm. The enzyme catalyses IMP + L-aspartate + GTP = N(6)-(1,2-dicarboxyethyl)-AMP + GDP + phosphate + 2 H(+). It functions in the pathway purine metabolism; AMP biosynthesis via de novo pathway; AMP from IMP: step 1/2. Its function is as follows. Plays an important role in the de novo pathway of purine nucleotide biosynthesis. Catalyzes the first committed step in the biosynthesis of AMP from IMP. The protein is Adenylosuccinate synthetase of Ruthia magnifica subsp. Calyptogena magnifica.